The chain runs to 223 residues: Putative archaetidylserine decarboxylase proenzyme (223 aa).

Ser183 acts as the Schiff-base intermediate with substrate; via pyruvic acid in catalysis. Ser183 is modified (pyruvic acid (Ser); by autocatalysis).

Belongs to the phosphatidylserine decarboxylase family. PSD-A subfamily. Heterodimer of a large membrane-associated beta subunit and a small pyruvoyl-containing alpha subunit. Pyruvate is required as a cofactor. In terms of processing, is synthesized initially as an inactive proenzyme. Formation of the active enzyme involves a self-maturation process in which the active site pyruvoyl group is generated from an internal serine residue via an autocatalytic post-translational modification. Two non-identical subunits are generated from the proenzyme in this reaction, and the pyruvate is formed at the N-terminus of the alpha chain, which is derived from the carboxyl end of the proenzyme. The post-translation cleavage follows an unusual pathway, termed non-hydrolytic serinolysis, in which the side chain hydroxyl group of the serine supplies its oxygen atom to form the C-terminus of the beta chain, while the remainder of the serine residue undergoes an oxidative deamination to produce ammonia and the pyruvoyl prosthetic group on the alpha chain.

It is found in the cell membrane. It catalyses the reaction archaetidylserine + H(+) = archaetidylethanolamine + CO2. Functionally, catalyzes the formation of archaetidylethanolamine (PtdEtn) from archaetidylserine (PtdSer). The chain is Putative archaetidylserine decarboxylase proenzyme from Methanothermobacter thermautotrophicus (strain ATCC 29096 / DSM 1053 / JCM 10044 / NBRC 100330 / Delta H) (Methanobacterium thermoautotrophicum).